Consider the following 346-residue polypeptide: Serpentine receptor class beta-11 (346 aa).

The next 7 helical transmembrane spans lie at 26–46, 57–77, 102–122, 139–159, 186–206, 239–259, and 278–298; these read YQMI…LFKL, TIFI…LTTS, IWNF…CSVT, SVVM…CIIF, FTFF…DLIL, VFLI…VVFF, and TFST…SSFF.

This sequence belongs to the nematode receptor-like protein srb family.

The protein localises to the membrane. The polypeptide is Serpentine receptor class beta-11 (srb-11) (Caenorhabditis elegans).